Here is a 529-residue protein sequence, read N- to C-terminus: Pheophorbide a oxygenase, chloroplastic (529 aa).

Disordered stretches follow at residues 1 to 24 (MPVMAPTASLLLSPRPLPASRRVP) and 46 to 72 (LRVAAPPSVPGEADQAPGETEPSTSSA). The transit peptide at 1–47 (MPVMAPTASLLLSPRPLPASRRVPSLPALSASGRLRLRRARADTRLR) directs the protein to the chloroplast. One can recognise a Rieske domain in the interval 82–194 (WYPVSLVEDL…TLVSQGLLFV (113 aa)). The [2Fe-2S] cluster site is built by C124, H126, C144, and H147.

The cofactor is [2Fe-2S] cluster. In terms of tissue distribution, expressed in leaves. Expressed at low levels in roots, stems, panicles and seeds.

The protein localises to the plastid. It is found in the chloroplast. The catalysed reaction is pheophorbide a + 2 reduced [2Fe-2S]-[ferredoxin] + O2 + 2 H(+) = red chlorophyll catabolite + 2 oxidized [2Fe-2S]-[ferredoxin]. It functions in the pathway porphyrin-containing compound metabolism; chlorophyll degradation. Functionally, catalyzes the key reaction of chlorophyll catabolism, porphyrin macrocycle cleavage of pheophorbide a (pheide a) to a primary fluorescent catabolite (pFCC). Works in a two-step reaction with red chlorophyll catabolite reductase (RCCR). Creates the intermediate RCC through the opening of the porphyrin macrocycle by the introduction of one atom of molecular oxygen at the alpha-methine bridge. Seems to be specific for pheide a. Belongs to the chlorophyll catabolic enzymes (CCEs). May play a role in senescence and response to wounding. In Oryza sativa subsp. japonica (Rice), this protein is Pheophorbide a oxygenase, chloroplastic.